The chain runs to 746 residues: Exostosin-1 (746 aa).

Residues 1–7 (MQAKKRY) are Cytoplasmic-facing. Residues 8–28 (FILLSAGSCLALLFYFGGLQF) traverse the membrane as a helical; Signal-anchor for type II membrane protein segment. The Lumenal portion of the chain corresponds to 29–746 (RASRSHSRRE…RKKYRDIERL (718 aa)). An N-linked (GlcNAc...) asparagine glycan is attached at Asn-89. 2 cysteine pairs are disulfide-bonded: Cys-98–Cys-103 and Cys-109–Cys-152. Leu-166 and Tyr-203 together coordinate a protein. UDP is bound by residues Lys-267, Lys-269, Tyr-271, and Arg-280. The cysteines at positions 298 and 312 are disulfide-linked. Residue His-300 coordinates a protein. 2 residues coordinate UDP: Tyr-319 and Tyr-324. Asn-330 carries N-linked (GlcNAc...) asparagine glycosylation. Intrachain disulfides connect Cys-334/Cys-355 and Cys-652/Cys-704. UDP is bound by residues Arg-346 and Glu-349.

Belongs to the glycosyltransferase 47 family. In terms of assembly, part of the heparan sulfate polymerase, a dimeric complex composed of EXT1 and EXT2. Could also form homooligomeric complexes. Interacts with NDST1. In terms of processing, N-glycosylated.

It is found in the golgi apparatus membrane. It localises to the golgi apparatus. The protein localises to the cis-Golgi network membrane. Its subcellular location is the endoplasmic reticulum membrane. The enzyme catalyses 3-O-{alpha-D-GlcNAc-[(1-&gt;4)-beta-D-GlcA-(1-&gt;4)-alpha-D-GlcNAc](n)-(1-&gt;4)-beta-D-GlcA-(1-&gt;3)-beta-D-Gal-(1-&gt;3)-beta-D-Gal-(1-&gt;4)-beta-D-Xyl}-L-seryl-[protein] + UDP-alpha-D-glucuronate = 3-O-{[(1-&gt;4)-beta-D-GlcA-(1-&gt;4)-alpha-D-GlcNAc](n+1)-(1-&gt;4)-beta-D-GlcA-(1-&gt;3)-beta-D-Gal-(1-&gt;3)-beta-D-Gal-(1-&gt;4)-beta-D-Xyl}-L-seryl-[protein] + UDP + H(+). Its pathway is protein modification; protein glycosylation. Functionally, glycosyltransferase forming with EXT2 the heterodimeric heparan sulfate polymerase which catalyzes the elongation of the heparan sulfate glycan backbone. Glycan backbone extension consists in the alternating transfer of (1-&gt;4)-beta-D-GlcA and (1-&gt;4)-alpha-D-GlcNAc residues from their respective UDP-sugar donors. Both EXT1 and EXT2 are required for the full activity of the polymerase since EXT1 bears the N-acetylglucosaminyl-proteoglycan 4-beta-glucuronosyltransferase activity within the complex while EXT2 carries the glucuronosyl-N-acetylglucosaminyl-proteoglycan 4-alpha-N-acetylglucosaminyltransferase activity. Heparan sulfate proteoglycans are ubiquitous components of the extracellular matrix and play an important role in tissue homeostasis and signaling. This is Exostosin-1 (EXT1) from Papio anubis (Olive baboon).